We begin with the raw amino-acid sequence, 337 residues long: Inositol 2-dehydrogenase (337 aa).

The protein belongs to the Gfo/Idh/MocA family. Homotetramer.

The enzyme catalyses myo-inositol + NAD(+) = scyllo-inosose + NADH + H(+). Involved in the oxidation of myo-inositol (MI) to 2-keto-myo-inositol (2KMI or 2-inosose). The protein is Inositol 2-dehydrogenase of Klebsiella pneumoniae subsp. pneumoniae (strain ATCC 700721 / MGH 78578).